A 423-amino-acid chain; its full sequence is Serine--tRNA ligase (423 aa).

231-233 (TAE) serves as a coordination point for L-serine. ATP is bound at residue 262–264 (RSE). Glu285 provides a ligand contact to L-serine. An ATP-binding site is contributed by 349-352 (EISS). Residue Ser384 participates in L-serine binding.

Belongs to the class-II aminoacyl-tRNA synthetase family. Type-1 seryl-tRNA synthetase subfamily. In terms of assembly, homodimer. The tRNA molecule binds across the dimer.

It localises to the cytoplasm. The enzyme catalyses tRNA(Ser) + L-serine + ATP = L-seryl-tRNA(Ser) + AMP + diphosphate + H(+). The catalysed reaction is tRNA(Sec) + L-serine + ATP = L-seryl-tRNA(Sec) + AMP + diphosphate + H(+). The protein operates within aminoacyl-tRNA biosynthesis; selenocysteinyl-tRNA(Sec) biosynthesis; L-seryl-tRNA(Sec) from L-serine and tRNA(Sec): step 1/1. In terms of biological role, catalyzes the attachment of serine to tRNA(Ser). Is also able to aminoacylate tRNA(Sec) with serine, to form the misacylated tRNA L-seryl-tRNA(Sec), which will be further converted into selenocysteinyl-tRNA(Sec). The chain is Serine--tRNA ligase from Acinetobacter baumannii (strain AB307-0294).